The sequence spans 231 residues: LexA repressor (231 aa).

The H-T-H motif DNA-binding region spans 26-46 (FEEMKEALDLKSKSGIHRLIG). Active-site for autocatalytic cleavage activity residues include Ser-152 and Lys-190.

This sequence belongs to the peptidase S24 family. Homodimer.

It catalyses the reaction Hydrolysis of Ala-|-Gly bond in repressor LexA.. Functionally, represses a number of genes involved in the response to DNA damage (SOS response), including recA and lexA. In the presence of single-stranded DNA, RecA interacts with LexA causing an autocatalytic cleavage which disrupts the DNA-binding part of LexA, leading to derepression of the SOS regulon and eventually DNA repair. In Acidiphilium cryptum (strain JF-5), this protein is LexA repressor.